Consider the following 156-residue polypeptide: Small ribosomal subunit protein uS7 (156 aa).

It belongs to the universal ribosomal protein uS7 family. Part of the 30S ribosomal subunit. Contacts proteins S9 and S11.

Its function is as follows. One of the primary rRNA binding proteins, it binds directly to 16S rRNA where it nucleates assembly of the head domain of the 30S subunit. Is located at the subunit interface close to the decoding center, probably blocks exit of the E-site tRNA. The protein is Small ribosomal subunit protein uS7 (rpsG) of Geobacillus stearothermophilus (Bacillus stearothermophilus).